The following is a 275-amino-acid chain: MTFLDMLRNATAQNQSMLCVGLDPEPSRFPAAMRGDASKIYDFCAAIVDATADLVNSFKPQIAYFAAHRAEDQLEKLMAHMRAVAPHVPIILDAKRGDIGSTAEQYAKEAFERYGADAVTLSPFMGFDSITPYLQYEGKGAFLLCRTSNPGGDDLQAQRLADLPGQPHLFEHVARLAQGPWNTNGQLGLVVGATRPQEIERVREFAPSLPLLIPGVGAQGGDAVATVKAARIGGGPIIINSSRAVLYASQGDDFAAAARTAAQATRQTLQDAAAA.

Lysine 95 (proton donor) is an active-site residue.

The protein belongs to the OMP decarboxylase family. Type 2 subfamily.

It carries out the reaction orotidine 5'-phosphate + H(+) = UMP + CO2. Its pathway is pyrimidine metabolism; UMP biosynthesis via de novo pathway; UMP from orotate: step 2/2. This Delftia acidovorans (strain DSM 14801 / SPH-1) protein is Orotidine 5'-phosphate decarboxylase.